Consider the following 418-residue polypeptide: Cell division protein FtsA (418 aa).

It belongs to the FtsA/MreB family. Self-interacts. Interacts with FtsZ.

The protein localises to the cell inner membrane. In terms of biological role, cell division protein that is involved in the assembly of the Z ring. May serve as a membrane anchor for the Z ring. The polypeptide is Cell division protein FtsA (Buchnera aphidicola subsp. Acyrthosiphon pisum (strain APS) (Acyrthosiphon pisum symbiotic bacterium)).